The following is a 93-amino-acid chain: Large ribosomal subunit protein bL27 (93 aa).

The propeptide occupies 1-10 (MLLKLQIQLF).

This sequence belongs to the bacterial ribosomal protein bL27 family. In terms of processing, the N-terminus is cleaved by ribosomal processing cysteine protease Prp.

The sequence is that of Large ribosomal subunit protein bL27 from Phytoplasma australiense.